A 119-amino-acid polypeptide reads, in one-letter code: Basic phospholipase A2 DE-1 (119 aa).

Intrachain disulfides connect Cys-11–Cys-71, Cys-26–Cys-118, Cys-28–Cys-44, Cys-43–Cys-99, Cys-50–Cys-92, Cys-60–Cys-85, and Cys-78–Cys-90. Ca(2+) is bound by residues Tyr-27, Gly-29, Gly-31, and Asp-48. Residue Asp-93 is part of the active site.

It belongs to the phospholipase A2 family. Group I subfamily. D49 sub-subfamily. Requires Ca(2+) as cofactor. In terms of tissue distribution, expressed by the venom gland.

Its subcellular location is the secreted. The catalysed reaction is a 1,2-diacyl-sn-glycero-3-phosphocholine + H2O = a 1-acyl-sn-glycero-3-phosphocholine + a fatty acid + H(+). In terms of biological role, PLA2 catalyzes the calcium-dependent hydrolysis of the 2-acyl groups in 3-sn-phosphoglycerides. This chain is Basic phospholipase A2 DE-1, found in Hemachatus haemachatus (Rinkhals).